The sequence spans 149 residues: Angiogenin (149 aa).

The signal sequence occupies residues 1–24; the sequence is MVMGLGPLVLIFVLGLGVTPPTLA. Glutamine 25 is modified (pyrrolidone carboxylic acid). Histidine 37 (proton acceptor) is an active-site residue. Position 45 (arginine 45) interacts with tRNA. 3 disulfide bridges follow: cysteine 50-cysteine 105, cysteine 63-cysteine 116, and cysteine 81-cysteine 131. Residues 55–59 carry the Nucleolar localization signal motif; it reads KRRDL. Cysteine 105 and isoleucine 127 together coordinate tRNA. Histidine 138 serves as the catalytic Proton donor.

The protein belongs to the pancreatic ribonuclease family. Homodimer. Interacts with RNH1; inhibiting ANG ribonuclease activity. Interacts with PCNA.

It localises to the secreted. It is found in the nucleus. Its subcellular location is the nucleolus. The protein localises to the cytoplasm. The protein resides in the stress granule. With respect to regulation, has weak tRNA ribonuclease activity by itself due to partial autoinhibition by its C-terminus, which folds into a short alpha-helix that partially occludes the substrate-binding site. In absence of stress, the ribonuclease activity is inhibited by RNH1 in the cytoplasm. In response to stress, dissociates from RNH1 in the cytoplasm and associates with cytoplasmic ribosomes with vacant A-sites: ribosomes directly activate the tRNA ribonuclease activity of ANG by refolding the C-terminal alpha-helix. In response to stress, the angiogenic activity of ANG is inhibited by RNH1 in the nucleus. Its function is as follows. Secreted ribonuclease that can either promote or restrict cell proliferation of target cells, depending on the context. Endocytosed in target cells via its receptor PLXNB2 and translocates to the cytoplasm or nucleus. Under stress conditions, localizes to the cytoplasm and promotes the assembly of stress granules (SGs): specifically cleaves a subset of tRNAs within anticodon loops to produce tRNA-derived stress-induced fragments (tiRNAs), resulting in translation repression and inhibition of cell proliferation. tiRNas also prevent formation of apoptosome, thereby promoting cell survival. Preferentially cleaves RNAs between a pyrimidine and an adenosine residue, suggesting that it cleaves the anticodon loop of tRNA(Ala) (32-UUAGCAU-38) after positions 33 and 36. Cleaves a subset of tRNAs, including tRNA(Ala), tRNA(Glu), tRNA(Gly), tRNA(Lys), tRNA(Val), tRNA(His), tRNA(Asp) and tRNA(Sec). Under growth conditions and in differentiated cells, translocates to the nucleus and stimulates ribosomal RNA (rRNA) transcription, including that containing the initiation site sequences of 45S rRNA, thereby promoting cell growth and proliferation. Angiogenin induces vascularization of normal and malignant tissues via its ability to promote rRNA transcription. Involved in hematopoietic stem and progenitor cell (HSPC) growth and survival by promoting rRNA transcription in growth conditions and inhibiting translation in response to stress, respectively. Mediates the crosstalk between myeloid and intestinal epithelial cells to protect the intestinal epithelial barrier integrity: secreted by myeloid cells and promotes intestinal epithelial cells proliferation and survival. Also mediates osteoclast-endothelial cell crosstalk in growing bone: produced by osteoclasts and protects the neighboring vascular cells against senescence by promoting rRNA transcription. The sequence is that of Angiogenin (ANG) from Oryctolagus cuniculus (Rabbit).